Reading from the N-terminus, the 274-residue chain is NH(3)-dependent NAD(+) synthetase (274 aa).

Glycine 46–serine 53 is a binding site for ATP. Aspartate 52 is a Mg(2+) binding site. Arginine 140 provides a ligand contact to deamido-NAD(+). Threonine 160 is an ATP binding site. Mg(2+) is bound at residue glutamate 165. Positions 173 and 180 each coordinate deamido-NAD(+). Residues lysine 189 and threonine 211 each contribute to the ATP site. Position 260–261 (histidine 260–lysine 261) interacts with deamido-NAD(+).

It belongs to the NAD synthetase family. In terms of assembly, homodimer.

It catalyses the reaction deamido-NAD(+) + NH4(+) + ATP = AMP + diphosphate + NAD(+) + H(+). It participates in cofactor biosynthesis; NAD(+) biosynthesis; NAD(+) from deamido-NAD(+) (ammonia route): step 1/1. Its function is as follows. Catalyzes the ATP-dependent amidation of deamido-NAD to form NAD. Uses ammonia as a nitrogen source. This chain is NH(3)-dependent NAD(+) synthetase, found in Streptococcus equi subsp. zooepidemicus (strain H70).